The following is a 461-amino-acid chain: Protein KlcB (461 aa).

2 disordered regions span residues 84 to 107 (PEAT…TEDK) and 349 to 379 (RAKA…EDAP). Over residues 91-101 (ARRRTKARKSK) the composition is skewed to basic residues. Residues 357-377 (GQRREPVTPAKPEPEPAKDED) show a composition bias toward basic and acidic residues.

This Escherichia coli protein is Protein KlcB (klcB).